A 564-amino-acid chain; its full sequence is Probable pectinesterase/pectinesterase inhibitor 46 (564 aa).

A helical membrane pass occupies residues 25-45; it reads IAIIAISSIVLVCIVVGAVVG. Residues 62–207 are pectinesterase inhibitor 46; the sequence is EPISVSVKAL…TEMTSNALAI (146 aa). Residues Asn90, Asn126, Asn147, and Asn196 are each glycosylated (N-linked (GlcNAc...) asparagine). Residues 257-550 are pectinesterase 46; sequence TIVVAKDGSG…FTVKPFIDGN (294 aa). Substrate-binding residues include Thr332 and Gln362. Asp385 acts as the Proton donor; for pectinesterase activity in catalysis. Residues Cys399 and Cys419 are joined by a disulfide bond. Asp406 acts as the Nucleophile; for pectinesterase activity in catalysis. N-linked (GlcNAc...) asparagine glycans are attached at residues Asn452 and Asn460. Substrate is bound by residues Arg470 and Trp472.

In the N-terminal section; belongs to the PMEI family. It in the C-terminal section; belongs to the pectinesterase family.

The protein localises to the membrane. The catalysed reaction is [(1-&gt;4)-alpha-D-galacturonosyl methyl ester](n) + n H2O = [(1-&gt;4)-alpha-D-galacturonosyl](n) + n methanol + n H(+). It functions in the pathway glycan metabolism; pectin degradation; 2-dehydro-3-deoxy-D-gluconate from pectin: step 1/5. Acts in the modification of cell walls via demethylesterification of cell wall pectin. The sequence is that of Probable pectinesterase/pectinesterase inhibitor 46 (PME46) from Arabidopsis thaliana (Mouse-ear cress).